The primary structure comprises 511 residues: Probable G-protein coupled receptor 101 (511 aa).

The Extracellular portion of the chain corresponds to 1 to 35 (MPPSCTNSTQENNGSRVCLPLSKMPISVAHGIIRS). N-linked (GlcNAc...) asparagine glycosylation is found at N7 and N13. Residues 36-56 (VVLLVILGVAFLGNVVLGYVL) form a helical membrane-spanning segment. Residues 57–67 (HRKPNLLQVTN) are Cytoplasmic-facing. The helical transmembrane segment at 68-90 (RFIFNLLVTDLLQVALVAPWVVS) threads the bilayer. At 91–106 (TAIPFFWPLNIHFCTA) the chain is on the extracellular side. A disulfide bridge links C104 with C182. The chain crosses the membrane as a helical span at residues 107 to 127 (LVSLTHLFAFASVNTIVVVSV). Residues 128 to 149 (DRYLTIIHPLSYPSKMTNRRSY) lie on the Cytoplasmic side of the membrane. A helical membrane pass occupies residues 150 to 170 (ILLYGTWIAAFLQSTPPLYGW). At 171 to 196 (GHATFDDRNAFCSMIWGASPAYTVVS) the chain is on the extracellular side. Residues 197-217 (VVSFLVIPLGVMIACYSVVFG) form a helical membrane-spanning segment. Residues 218–398 (AARRQQALLY…PPCYECKAAR (181 aa)) lie on the Cytoplasmic side of the membrane. The segment covering 240 to 261 (DSVVHENEEGAKKRDEFQDKNE) has biased composition (basic and acidic residues). Disordered regions lie at residues 240 to 315 (DSVV…EVSN) and 367 to 386 (EAMR…TSDP). Polar residues predominate over residues 376–385 (PPSRRNSTSD). Residues 399 to 419 (VIFVIISTYVLSLGPYCFLAV) form a helical membrane-spanning segment. Residues 420 to 432 (LAVWVDIDTRVPQ) are Extracellular-facing. Residues 433 to 453 (WVITIIIWLFFLQCCIHPYVY) traverse the membrane as a helical segment. Over 454 to 511 (GYMHKSIKKEIQEVLKKLICKKSPPVEDSHPDLHETEAGTEGGIEGKAVPSHDSATSP) the chain is Cytoplasmic. The interval 476 to 511 (SPPVEDSHPDLHETEAGTEGGIEGKAVPSHDSATSP) is disordered. The segment covering 477-490 (PPVEDSHPDLHETE) has biased composition (basic and acidic residues).

It belongs to the G-protein coupled receptor 1 family. As to expression, expressed in the brain in hypothalamus.

Its subcellular location is the cell membrane. Its function is as follows. Orphan receptor. The protein is Probable G-protein coupled receptor 101 (Gpr101) of Mus musculus (Mouse).